Reading from the N-terminus, the 541-residue chain is Chaperonin GroEL (541 aa).

ATP contacts are provided by residues 29 to 32 (TLGP), 86 to 90 (DGTTT), Gly-413, 478 to 480 (NAA), and Asp-494.

Belongs to the chaperonin (HSP60) family. In terms of assembly, forms a cylinder of 14 subunits composed of two heptameric rings stacked back-to-back. Interacts with the co-chaperonin GroES.

It is found in the cytoplasm. The catalysed reaction is ATP + H2O + a folded polypeptide = ADP + phosphate + an unfolded polypeptide.. In terms of biological role, together with its co-chaperonin GroES, plays an essential role in assisting protein folding. The GroEL-GroES system forms a nano-cage that allows encapsulation of the non-native substrate proteins and provides a physical environment optimized to promote and accelerate protein folding. The chain is Chaperonin GroEL from Agathobacter rectalis (strain ATCC 33656 / DSM 3377 / JCM 17463 / KCTC 5835 / VPI 0990) (Eubacterium rectale).